The sequence spans 91 residues: Probable Thioredoxin (91 aa).

A Glutaredoxin domain is found at 1–91 (MVMMKLFTSP…LKGGEEYGAS (91 aa)). An intrachain disulfide couples Cys12 to Cys15.

Belongs to the glutaredoxin family.

The protein resides in the cytoplasm. In terms of biological role, acts to maintain redox homeostasis; functions as a protein disulfide reductase. The polypeptide is Probable Thioredoxin (Archaeoglobus fulgidus (strain ATCC 49558 / DSM 4304 / JCM 9628 / NBRC 100126 / VC-16)).